A 687-amino-acid polypeptide reads, in one-letter code: Chloride channel protein ClC-Kb (687 aa).

Residues 1–50 (MEEIVGLREGSPRKPVPLQELWRPCPRIRRNIQGSLEWLKERLFRVGEDW) are Cytoplasmic-facing. Transmembrane regions (helical) follow at residues 51-82 (YFLV…KWLY) and 91-111 (LRYL…SGFS). Positions 116-127 (PSSGGSGIPEVK) form an intramembrane region, helical. S121 contacts chloride. Helical transmembrane passes span 141 to 160 (IKNF…TGST) and 161 to 180 (IFLG…AAYL). The N-linked (GlcNAc...) asparagine glycan is linked to N193. Positions 203–224 (AGAAVGVATVFAAPISGVLFSI) form an intramembrane region, helical. The helical transmembrane segment at 236–255 (YWRGFFAATCGAFMFHLLAV) threads the bilayer. 4 residues coordinate Ca(2+): E259, E261, D278, and E281. A run of 2 helical transmembrane segments spans residues 282–310 (IFFF…LFFL) and 325–342 (PLYS…TYPP). An intramembrane region (helical) is located at residues 349–360 (ASRLSMSEYLET). 2 consecutive transmembrane segments (helical) span residues 400–420 (GTLV…TTIP) and 421–440 (IPAG…GRLF). F426 lines the chloride pocket. Positions 464–496 (GAYALAGAAAFSGAVTHTLSTALLAFEVSGQIV) form an intramembrane region, helical. Residues 500–520 (PVLMAVLAANAICQSYQPSFY) form a helical membrane-spanning segment. The Cytoplasmic portion of the chain corresponds to 521–687 (DGTIIVKKLP…STLTNPPAPK (167 aa)). 2 consecutive CBS domains span residues 551–609 (MNCT…DSAS) and 626–687 (CPTQ…PAPK).

This sequence belongs to the chloride channel (TC 2.A.49) family. CLCNKB subfamily. Homodimer. Interacts with BSND. Post-translationally, N-glycosylated. As to expression, expressed predominantly in the kidney. Expressed in all segments of the nephron examined, including the S2 segment and the glomerulus.

Its subcellular location is the basolateral cell membrane. The enzyme catalyses chloride(in) = chloride(out). It catalyses the reaction iodide(out) = iodide(in). It carries out the reaction nitrate(in) = nitrate(out). The catalysed reaction is bromide(in) = bromide(out). In terms of biological role, anion-selective channel permeable to small monovalent anions with ion selectivity for chloride &gt; bromide &gt; nitrate &gt; iodide. Forms a homodimeric channel where each subunit has its own ion conduction pathway. May conduct double-barreled currents controlled by two types of gates, two fast gates that control each subunit independently and a slow common gate that opens and shuts off both subunits simultaneously. Assembles with the regulatory subunit BSND/Barttin for sorting at the basolateral plasma membrane domain and functional switch to the ion conducting state. CLCNKB:BSND channels display mostly a linear current-voltage relationship controlled by common gate. Mediates chloride conductance along nephron segments, namely the thick ascending limb of Henle's loop, convoluted tubule and the collecting duct, contributing to the maintenance of systemic acid-base and electrolyte homeostasis. Conducts chloride currents in the stria vascularis of the inner ear to establish the endocochlear potential necessary for normal hearing. The sequence is that of Chloride channel protein ClC-Kb from Rattus norvegicus (Rat).